The sequence spans 268 residues: Ribosomal RNA small subunit methyltransferase A (268 aa).

S-adenosyl-L-methionine contacts are provided by Asn-16, Leu-18, Gly-43, Glu-64, Asp-89, and Asn-110.

Belongs to the class I-like SAM-binding methyltransferase superfamily. rRNA adenine N(6)-methyltransferase family. RsmA subfamily.

The protein resides in the cytoplasm. It catalyses the reaction adenosine(1518)/adenosine(1519) in 16S rRNA + 4 S-adenosyl-L-methionine = N(6)-dimethyladenosine(1518)/N(6)-dimethyladenosine(1519) in 16S rRNA + 4 S-adenosyl-L-homocysteine + 4 H(+). Functionally, specifically dimethylates two adjacent adenosines (A1518 and A1519) in the loop of a conserved hairpin near the 3'-end of 16S rRNA in the 30S particle. May play a critical role in biogenesis of 30S subunits. This chain is Ribosomal RNA small subunit methyltransferase A, found in Pseudomonas savastanoi pv. phaseolicola (strain 1448A / Race 6) (Pseudomonas syringae pv. phaseolicola (strain 1448A / Race 6)).